Consider the following 149-residue polypeptide: Flagellar assembly factor FliW (149 aa).

It belongs to the FliW family. Interacts with translational regulator CsrA and flagellin(s).

The protein localises to the cytoplasm. In terms of biological role, acts as an anti-CsrA protein, binds CsrA and prevents it from repressing translation of its target genes, one of which is flagellin. Binds to flagellin and participates in the assembly of the flagellum. The polypeptide is Flagellar assembly factor FliW (Thermotoga sp. (strain RQ2)).